Here is a 481-residue protein sequence, read N- to C-terminus: Probable glycine dehydrogenase (decarboxylating) subunit 2 (481 aa).

Lys269 carries the N6-(pyridoxal phosphate)lysine modification.

This sequence belongs to the GcvP family. C-terminal subunit subfamily. The glycine cleavage system is composed of four proteins: P, T, L and H. In this organism, the P 'protein' is a heterodimer of two subunits. Requires pyridoxal 5'-phosphate as cofactor.

The catalysed reaction is N(6)-[(R)-lipoyl]-L-lysyl-[glycine-cleavage complex H protein] + glycine + H(+) = N(6)-[(R)-S(8)-aminomethyldihydrolipoyl]-L-lysyl-[glycine-cleavage complex H protein] + CO2. Its function is as follows. The glycine cleavage system catalyzes the degradation of glycine. The P protein binds the alpha-amino group of glycine through its pyridoxal phosphate cofactor; CO(2) is released and the remaining methylamine moiety is then transferred to the lipoamide cofactor of the H protein. This chain is Probable glycine dehydrogenase (decarboxylating) subunit 2, found in Chlorobium chlorochromatii (strain CaD3).